Here is a 187-residue protein sequence, read N- to C-terminus: MKITALEGQKISELSMIEVAHALLEQNGKEMQFSEIIRAIQDYLEKSDDEIKASISSFYTEINTDGSFIPLGNNVWALRSWYAIDEIDEEVIALDEIEDEEEEKPAKKRKKVNAFGIEDEIDPEDEEGTKETTEEDMSYDTQAEDEDKDDVAAYDAELAEVELDNVDEEVDIELEDDEDDSDDTDED.

In terms of domain architecture, HTH HARE-type spans 14 to 81; it reads LSMIEVAHAL…GNNVWALRSW (68 aa). Residues 96–187 form a disordered region; it reads EIEDEEEEKP…EDDSDDTDED (92 aa). Acidic residues-rich tracts occupy residues 117–149 and 157–187; these read IEDE…EDKD and ELAE…TDED.

Belongs to the RpoE family. RNAP is composed of a core of 2 alpha, a beta and a beta' subunits. The core is associated with a delta subunit and one of several sigma factors.

Its function is as follows. Participates in both the initiation and recycling phases of transcription. In the presence of the delta subunit, RNAP displays an increased specificity of transcription, a decreased affinity for nucleic acids, and an increased efficiency of RNA synthesis because of enhanced recycling. This is Probable DNA-directed RNA polymerase subunit delta from Lactococcus lactis subsp. cremoris (strain SK11).